The sequence spans 718 residues: MKLLLALAGLLAPLAMLQTSNGATPALLGEVENSVVLSCMEEAKQLVDRAYKERRESIKRSLQSGSASPTELLFYFKQPVAGTRTAVRAADYLHVALDLLKRKLQPLWPRPFNVTDVLTPAQLNLLSVSSGCAYQDVRVTCPPNDKYRTITGHCNNRRSPTLGASNRAFVRWLPAEYEDGVSMPFGWTPGVNRNGFKVPLARQVSNAIVRFPNDQLTKDQERALMFMQWGQFLDHDITLTPEPATRFSFFTGLNCETSCLQQPPCFPLKIPPNDPRIKNQKDCIPFFRSCPACTRNNITIRNQINALTSFVDASGVYGSEDPLARKLRNLTNQLGLLAINTRFQDNGRALMPFDSLHDDPCLLTNRSARIPCFLAGDMRSSEMPELTSMHTLFVREHNRLATQLKRLNPRWNGEKLYQEARKIVGAMVQIITYRDYLPLVLGPAAMKKYLPQYRSYNDSVDPRIANVFTNAFRYGHTLIQPFMFRLNNQYRPTGPNPRVPLSKVFFASWRVVLEGGIDPILRGLMATPAKLNRQNQIVVDEIRERLFEQVMRIGLDLPALNMQRSRDHGLPGYNAWRRFCGLPQPSTVGELGTVLKNLELARKLMAQYGTPNNIDIWMGGVSEPLEPNGRVGQLLACLIGTQFRKLRDGDRFWWENPGVFSKQQRQALASISLPRIICDNTGITTVSKNNIFMSNTYPRDFVSCNTLPKLNLTSWKET.

The N-terminal stretch at 1–15 is a signal peptide; the sequence is MKLLLALAGLLAPLA. The propeptide occupies 16–138; that stretch reads MLQTSNGATP…SSGCAYQDVR (123 aa). Residue Asn113 is glycosylated (N-linked (GlcNAc...) asparagine). A disulfide bridge links Cys141 with Cys154. Asp234 is a binding site for heme b. Catalysis depends on His235, which acts as the Proton acceptor. Ca(2+) is bound at residue Asp236. 2 disulfides stabilise this stretch: Cys255/Cys265 and Cys259/Cys283. Residue Cys290 is modified to Cysteine sulfenic acid (-SOH). Asn297 carries N-linked (GlcNAc...) asparagine glycosylation. Positions 308, 310, 312, and 314 each coordinate Ca(2+). Residues Asn329 and Asn365 are each glycosylated (N-linked (GlcNAc...) asparagine). Cys361 and Cys372 form a disulfide bridge. Residues Glu382 and Met383 each contribute to the heme b site. The N-linked (GlcNAc...) asparagine glycan is linked to Asn457. His476 lines the heme b pocket. 2 disulfide bridges follow: Cys580/Cys637 and Cys678/Cys704. Asn711 carries an N-linked (GlcNAc...) asparagine glycan.

It belongs to the peroxidase family. XPO subfamily. In terms of assembly, homodimer; disulfide-linked. Each monomer consists of a light and a heavy chain. Found in a complex with CP and LTF; interacts directly with CP, which protects CP antioxidant properties by MPO. Ca(2+) serves as cofactor. Requires heme b as cofactor.

It is found in the lysosome. It catalyses the reaction chloride + H2O2 + H(+) = hypochlorous acid + H2O. Part of the host defense system of polymorphonuclear leukocytes. It is responsible for microbicidal activity against a wide range of organisms. In the stimulated PMN, MPO catalyzes the production of hypohalous acids, primarily hypochlorous acid in physiologic situations, and other toxic intermediates that greatly enhance PMN microbicidal activity. Mediates the proteolytic cleavage of alpha-1-microglobulin to form t-alpha-1-microglobulin, which potently inhibits oxidation of low density lipoprotein particles and limits vascular damage. The protein is Myeloperoxidase (Mpo) of Mus musculus (Mouse).